Consider the following 288-residue polypeptide: Polyamine aminopropyltransferase (288 aa).

The 230-residue stretch at 9–238 (ETLHDQFGQY…GIMTFAWATD (230 aa)) folds into the PABS domain. Glutamine 33 contacts S-methyl-5'-thioadenosine. Residues histidine 64 and aspartate 88 each coordinate spermidine. S-methyl-5'-thioadenosine contacts are provided by residues glutamate 108 and 140–141 (DG). Catalysis depends on aspartate 158, which acts as the Proton acceptor. 158–161 (DCTD) lines the spermidine pocket. Proline 165 contributes to the S-methyl-5'-thioadenosine binding site.

Belongs to the spermidine/spermine synthase family. In terms of assembly, homodimer or homotetramer.

The protein localises to the cytoplasm. It carries out the reaction S-adenosyl 3-(methylsulfanyl)propylamine + putrescine = S-methyl-5'-thioadenosine + spermidine + H(+). The protein operates within amine and polyamine biosynthesis; spermidine biosynthesis; spermidine from putrescine: step 1/1. Functionally, catalyzes the irreversible transfer of a propylamine group from the amino donor S-adenosylmethioninamine (decarboxy-AdoMet) to putrescine (1,4-diaminobutane) to yield spermidine. The polypeptide is Polyamine aminopropyltransferase (Shigella flexneri serotype 5b (strain 8401)).